The chain runs to 153 residues: Large ribosomal subunit protein uL15 (153 aa).

Residues 21 to 41 (RGIGSGKGKTGGRGIKGQKSR) are disordered. The span at 23–35 (IGSGKGKTGGRGI) shows a compositional bias: gly residues.

This sequence belongs to the universal ribosomal protein uL15 family. As to quaternary structure, part of the 50S ribosomal subunit.

In terms of biological role, binds to the 23S rRNA. This is Large ribosomal subunit protein uL15 from Rickettsia felis (strain ATCC VR-1525 / URRWXCal2) (Rickettsia azadi).